We begin with the raw amino-acid sequence, 78 residues long: Cytochrome c oxidase subunit 8, mitochondrial (78 aa).

The N-terminal 27 residues, 1-27 (MLCQQMIRTTAKRSSNIMTRPIIMKRS), are a transit peptide targeting the mitochondrion. The Mitochondrial matrix portion of the chain corresponds to 28–51 (VHFKDGVYENIPFKVKGRKTPYAL). A helical membrane pass occupies residues 52-73 (SHFGFFAIGFAVPFVACYVQLK). Lysine 74 is a topological domain (mitochondrial intermembrane). Positions 75 to 78 (SGAF) are excised as a propeptide.

Belongs to the cytochrome c oxidase VIIc family. In terms of assembly, component of the cytochrome c oxidase (complex IV, CIV), a multisubunit enzyme composed of 12 subunits. The complex is composed of a catalytic core of 3 subunits COX1, COX2 and COX3, encoded in the mitochondrial DNA, and 9 supernumerary subunits COX4, COX5A (or COX5B), COX6, COX7, COX8, COX9, COX12, COX13 and COX26, which are encoded in the nuclear genome. The complex exists as a monomer or a dimer and forms supercomplexes (SCs) in the inner mitochondrial membrane with a dimer of ubiquinol-cytochrome c oxidoreductase (cytochrome b-c1 complex, complex III, CIII), resulting in 2 different assemblies (supercomplexes III(2)IV and III(2)IV(2)).

The protein resides in the mitochondrion inner membrane. It participates in energy metabolism; oxidative phosphorylation. Its function is as follows. Component of the cytochrome c oxidase, the last enzyme in the mitochondrial electron transport chain which drives oxidative phosphorylation. The respiratory chain contains 3 multisubunit complexes succinate dehydrogenase (complex II, CII), ubiquinol-cytochrome c oxidoreductase (cytochrome b-c1 complex, complex III, CIII) and cytochrome c oxidase (complex IV, CIV), that cooperate to transfer electrons derived from NADH and succinate to molecular oxygen, creating an electrochemical gradient over the inner membrane that drives transmembrane transport and the ATP synthase. Cytochrome c oxidase is the component of the respiratory chain that catalyzes the reduction of oxygen to water. Electrons originating from reduced cytochrome c in the intermembrane space (IMS) are transferred via the dinuclear copper A center (CU(A)) of COX2 and heme A of COX1 to the active site in COX1, a binuclear center (BNC) formed by heme A3 and copper B (CU(B)). The BNC reduces molecular oxygen to 2 water molecules using 4 electrons from cytochrome c in the IMS and 4 protons from the mitochondrial matrix. The chain is Cytochrome c oxidase subunit 8, mitochondrial (COX8) from Saccharomyces cerevisiae (strain ATCC 204508 / S288c) (Baker's yeast).